Here is a 452-residue protein sequence, read N- to C-terminus: MFNFGEILETLKMIQEENLDIRTITLGVSLLDCVDSSIAKTCENIKQKIREKGQYLVETAKKLEIKYGIPIVNARVAVTPVSLLAGGFTETETVKIGYALEEIAQEIGVNFIGGFSALVHKGFTKGDINVLNTIPRVLAETERVCASINVATTRAGINMDGINFSARIIKETAERTRDKDGLGCAKIVVFANAPEDNPFMAGAFHGVGEADYVVNVGVSGPGVVKRVVEKIPGADLEELANEIKKTAFKITRVGELIGKEAAKMLGVKFGIVDLSLAPTPAMGDSVAEIIEAMGLEYCGAPGTTAALMMLTDAVKKGGAMASSMVGGLSGAFIPVSEDMGMVRAVEVGALNIEKLEAMTAVCSVGLDMIAIPGETPVSTIAGIIADEISIGVINGKTTAVRIIPVPGKKAGEYVEFGGLLGRTVIMDVNRFSSEKFVMRGGRIPAPIQSLRN.

Belongs to the UPF0210 family. As to quaternary structure, homodimer.

The chain is UPF0210 protein CHY_1509 from Carboxydothermus hydrogenoformans (strain ATCC BAA-161 / DSM 6008 / Z-2901).